The chain runs to 78 residues: Defensin-like protein 141 (78 aa).

A signal peptide spans 1–24; it reads MTKSIISAFFIILILGMMVNEIEG. 4 disulfide bridges follow: Cys-31–Cys-76, Cys-40–Cys-59, Cys-45–Cys-70, and Cys-49–Cys-72.

This sequence belongs to the DEFL family.

Its subcellular location is the secreted. In Arabidopsis thaliana (Mouse-ear cress), this protein is Defensin-like protein 141 (LCR3).